A 192-amino-acid polypeptide reads, in one-letter code: 7-methyl-GTP pyrophosphatase (192 aa).

Aspartate 69 serves as the catalytic Proton acceptor.

It belongs to the Maf family. YceF subfamily. It depends on a divalent metal cation as a cofactor.

It localises to the cytoplasm. It catalyses the reaction N(7)-methyl-GTP + H2O = N(7)-methyl-GMP + diphosphate + H(+). Its function is as follows. Nucleoside triphosphate pyrophosphatase that hydrolyzes 7-methyl-GTP (m(7)GTP). May have a dual role in cell division arrest and in preventing the incorporation of modified nucleotides into cellular nucleic acids. This chain is 7-methyl-GTP pyrophosphatase (maf-1), found in Pseudomonas syringae pv. tomato (strain ATCC BAA-871 / DC3000).